Reading from the N-terminus, the 101-residue chain is Enhancer of yellow 2 transcription factor (101 aa).

This sequence belongs to the ENY2 family. In terms of assembly, component of the nuclear pore complex (NPC)-associated AMEX complex (anchoring and mRNA export complex), composed of at least e(y)2 and xmas-2. Component of the SAGA transcription coactivator-HAT complexes, at least composed of Ada2b, e(y)2, Pcaf/Gcn5, Taf10 and Nipped-A/Trrap. Within the SAGA complex, e(y)2, Sgf11, and not/nonstop form an additional subcomplex of SAGA called the DUB module (deubiquitination module). Component of the THO complex, composed of at least e(y)2, HPR1, THO2, THOC5, THOC6 and THOC7. Interacts with e(y)1. Interacts with su(Hw) (via zinc fingers). Interacts with xmas-2; required for localization to the nuclear periphery. Interacts with the nuclear pore complex (NPC).

The protein resides in the nucleus. It localises to the nucleoplasm. It is found in the cytoplasm. Involved in mRNA export coupled transcription activation by association with both the AMEX and the SAGA complexes. The SAGA complex is a multiprotein complex that activates transcription by remodeling chromatin and mediating histone acetylation and deubiquitination. Within the SAGA complex, participates in a subcomplex that specifically deubiquitinates histone H2B. The SAGA complex is recruited to specific gene promoters by activators, where it is required for transcription. Required for nuclear receptor-mediated transactivation. Involved in transcription elongation by recruiting the THO complex onto nascent mRNA. The AMEX complex functions in docking export-competent ribonucleoprotein particles (mRNPs) to the nuclear entrance of the nuclear pore complex (nuclear basket). AMEX participates in mRNA export and accurate chromatin positioning in the nucleus by tethering genes to the nuclear periphery. This Drosophila erecta (Fruit fly) protein is Enhancer of yellow 2 transcription factor.